The chain runs to 447 residues: Pentatricopeptide repeat-containing protein At3g53170 (447 aa).

10 PPR repeats span residues 93-127 (RCKT…GLKP), 128-158 (TIDV…MKSV), 164-198 (DVFT…GVGC), 199-233 (STVT…GDSL), 235-269 (DVCT…GVQP), 270-304 (DITT…FFSL), 305-339 (TTVT…GVKP), 340-374 (NSIT…DVVL), 375-409 (DTPF…KCKP), and 410-444 (DKIT…GENL).

It belongs to the PPR family. P subfamily.

The sequence is that of Pentatricopeptide repeat-containing protein At3g53170 from Arabidopsis thaliana (Mouse-ear cress).